The following is a 410-amino-acid chain: Multifunctional CCA protein (410 aa).

Positions 8 and 11 each coordinate ATP. The CTP site is built by Gly-8 and Arg-11. Residues Glu-21 and Asp-23 each coordinate Mg(2+). ATP is bound by residues Arg-91, Arg-137, and Arg-140. 3 residues coordinate CTP: Arg-91, Arg-137, and Arg-140. The 102-residue stretch at 228 to 329 (TGVHVLSVLR…LELLQRFDVF (102 aa)) folds into the HD domain.

This sequence belongs to the tRNA nucleotidyltransferase/poly(A) polymerase family. Bacterial CCA-adding enzyme type 1 subfamily. Monomer. Can also form homodimers and oligomers. It depends on Mg(2+) as a cofactor. The cofactor is Ni(2+).

It carries out the reaction a tRNA precursor + 2 CTP + ATP = a tRNA with a 3' CCA end + 3 diphosphate. It catalyses the reaction a tRNA with a 3' CCA end + 2 CTP + ATP = a tRNA with a 3' CCACCA end + 3 diphosphate. Catalyzes the addition and repair of the essential 3'-terminal CCA sequence in tRNAs without using a nucleic acid template. Adds these three nucleotides in the order of C, C, and A to the tRNA nucleotide-73, using CTP and ATP as substrates and producing inorganic pyrophosphate. tRNA 3'-terminal CCA addition is required both for tRNA processing and repair. Also involved in tRNA surveillance by mediating tandem CCA addition to generate a CCACCA at the 3' terminus of unstable tRNAs. While stable tRNAs receive only 3'-terminal CCA, unstable tRNAs are marked with CCACCA and rapidly degraded. The polypeptide is Multifunctional CCA protein (Ectopseudomonas mendocina (strain ymp) (Pseudomonas mendocina)).